The primary structure comprises 89 residues: Small ribosomal subunit protein bS20 (89 aa).

Disordered stretches follow at residues 1 to 25 (MANI…ASMK) and 69 to 89 (KNAA…IQAS). The segment covering 7–20 (AIKRAKTSEKRRAH) has biased composition (basic residues).

This sequence belongs to the bacterial ribosomal protein bS20 family.

In terms of biological role, binds directly to 16S ribosomal RNA. In Geobacillus thermodenitrificans (strain NG80-2), this protein is Small ribosomal subunit protein bS20.